We begin with the raw amino-acid sequence, 310 residues long: Ribonuclease Z (310 aa).

Residues His-63, His-65, Asp-67, His-68, His-141, Asp-212, and His-270 each contribute to the Zn(2+) site. The active-site Proton acceptor is the Asp-67.

This sequence belongs to the RNase Z family. In terms of assembly, homodimer. Requires Zn(2+) as cofactor.

It carries out the reaction Endonucleolytic cleavage of RNA, removing extra 3' nucleotides from tRNA precursor, generating 3' termini of tRNAs. A 3'-hydroxy group is left at the tRNA terminus and a 5'-phosphoryl group is left at the trailer molecule.. Zinc phosphodiesterase, which displays some tRNA 3'-processing endonuclease activity. Probably involved in tRNA maturation, by removing a 3'-trailer from precursor tRNA. This chain is Ribonuclease Z, found in Limosilactobacillus fermentum (strain NBRC 3956 / LMG 18251) (Lactobacillus fermentum).